Here is a 637-residue protein sequence, read N- to C-terminus: Acyl-CoA ligase cm3C (637 aa).

ATP is bound by residues 282–290 (TSGTSGRQK), 423–428 (HAWGLT), D507, R526, and K624. Residues 353–423 (DMQRMLGSVA…SLQPSWEFLH (71 aa)) are SBD1. The interval 424–486 (AWGLTETCIV…YKAPNMFVGY (63 aa)) is SBD2.

It belongs to the ATP-dependent AMP-binding enzyme family.

It functions in the pathway secondary metabolite biosynthesis. Acyl-CoA ligase; part of the gene cluster that mediates the biosynthesis of beauveriolides I and III, cyclodepsipeptides acting as inhibitors of the acyl-CoA:cholesterol acyltransferase. The HR-PKS cm3B initiates the biosynthesis of beauveriolides by iteratively catalyzing the formation of the linear polyketide chain. The ATP-dependent acetyl-CoA ligase cm3D converts the polyketide carboxylic acid to a CoA thioester which id shuttled to the first T domain in the NRPS cm3A by the acetyltransferase cm3C. Cm3A contains 13 domains and assembles the polyketide chain, L-phenylalanine, L-alanine, and D-leucine (or D-allo-isoleucine) to form beauveriolide I (or beauveriolide III). The production of both beauveriolides I and III suggests the substrate adaptability of cm3B, using different amino acids as substrates. This is Acyl-CoA ligase cm3C from Cordyceps militaris (strain CM01) (Caterpillar fungus).